The chain runs to 238 residues: Sugar fermentation stimulation protein homolog (238 aa).

Belongs to the SfsA family.

The protein is Sugar fermentation stimulation protein homolog of Vibrio vulnificus (strain CMCP6).